A 134-amino-acid chain; its full sequence is Small ribosomal subunit protein bS6 (134 aa).

Positions 100–134 (SFLARDETDRRERSEETAEGEGEPDHSANEAVVTA) are disordered. Over residues 103 to 115 (ARDETDRRERSEE) the composition is skewed to basic and acidic residues.

It belongs to the bacterial ribosomal protein bS6 family.

Its function is as follows. Binds together with bS18 to 16S ribosomal RNA. In Acidithiobacillus ferrooxidans (strain ATCC 23270 / DSM 14882 / CIP 104768 / NCIMB 8455) (Ferrobacillus ferrooxidans (strain ATCC 23270)), this protein is Small ribosomal subunit protein bS6.